Reading from the N-terminus, the 406-residue chain is Succinylornithine transaminase (406 aa).

Lysine 252 bears the N6-(pyridoxal phosphate)lysine mark.

This sequence belongs to the class-III pyridoxal-phosphate-dependent aminotransferase family. AstC subfamily. Pyridoxal 5'-phosphate serves as cofactor.

It catalyses the reaction N(2)-succinyl-L-ornithine + 2-oxoglutarate = N-succinyl-L-glutamate 5-semialdehyde + L-glutamate. It functions in the pathway amino-acid degradation; L-arginine degradation via AST pathway; L-glutamate and succinate from L-arginine: step 3/5. In terms of biological role, catalyzes the transamination of N(2)-succinylornithine and alpha-ketoglutarate into N(2)-succinylglutamate semialdehyde and glutamate. Can also act as an acetylornithine aminotransferase. The polypeptide is Succinylornithine transaminase (Escherichia coli O157:H7).